The primary structure comprises 282 residues: Pantothenate synthetase (282 aa).

28–35 provides a ligand contact to ATP; sequence MGALHSGH. His35 functions as the Proton donor in the catalytic mechanism. Gln59 provides a ligand contact to (R)-pantoate. Gln59 is a binding site for beta-alanine. 146-149 is an ATP binding site; that stretch reads GEKD. Position 152 (Gln152) interacts with (R)-pantoate. Residues Val175 and 183-186 each bind ATP; that span reads LSSR.

Belongs to the pantothenate synthetase family. As to quaternary structure, homodimer.

It localises to the cytoplasm. It catalyses the reaction (R)-pantoate + beta-alanine + ATP = (R)-pantothenate + AMP + diphosphate + H(+). It participates in cofactor biosynthesis; (R)-pantothenate biosynthesis; (R)-pantothenate from (R)-pantoate and beta-alanine: step 1/1. Functionally, catalyzes the condensation of pantoate with beta-alanine in an ATP-dependent reaction via a pantoyl-adenylate intermediate. The protein is Pantothenate synthetase of Salinispora arenicola (strain CNS-205).